A 351-amino-acid chain; its full sequence is Cyanuric acid amidohydrolase (351 aa).

Positions 1–96 are RU A; the sequence is MPSLRAHVFR…HWTVFARETV (96 aa). Substrate is bound by residues Arg-53 and 77-78; that span reads SG. An RU B region spans residues 103–240; the sequence is ALAIGVSRTP…HEIIVLGMSA (138 aa). Residue Lys-153 is part of the active site. Residues Arg-185 and 223–224 each bind substrate; that span reads SS. The active-site Nucleophile is the Ser-223. The segment at 246-351 is RU C; sequence LSIDHAVMRD…PVAIIVEKEQ (106 aa). Glu-283 serves as a coordination point for Mg(2+). Substrate is bound by residues Arg-310 and 329-330; that span reads SG. Mg(2+) contacts are provided by Ala-332, Gln-335, Gly-336, Pro-337, and Gly-340.

Belongs to the cyclic amide hydrolase (CyAH) family. In terms of assembly, homotetramer.

It catalyses the reaction cyanurate + H2O = 1-carboxybiuret + H(+). Its pathway is xenobiotic degradation; atrazine degradation; biuret from cyanurate: step 1/1. Its activity is regulated as follows. Inhibited by barbituric acid. Functionally, responsible for the hydrolysis of cyanuric acid, an intermediate formed during catabolism of s-triazine based compounds in herbicides such as atrazine and polymers such as melamine. Catalyzes the hydrolytic opening of the s-triazine ring of cyanuric acid (2,4,6-trihydroxy-s-triazine) to yield carbon dioxide and carboxybiuret, which spontaneously decarboxylates to biuret. This Rhizobium johnstonii (strain DSM 114642 / LMG 32736 / 3841) (Rhizobium leguminosarum bv. viciae) protein is Cyanuric acid amidohydrolase.